A 143-amino-acid polypeptide reads, in one-letter code: UPF0292 protein Mbar_A0484 (143 aa).

The region spanning 28–109 is the Toprim domain; sequence GAIIIVEGKR…KPELEIRNKL (82 aa). Glu-34, Asp-78, and Asp-80 together coordinate Mg(2+).

This sequence belongs to the UPF0292 family. Mg(2+) serves as cofactor.

The polypeptide is UPF0292 protein Mbar_A0484 (Methanosarcina barkeri (strain Fusaro / DSM 804)).